A 216-amino-acid polypeptide reads, in one-letter code: Ribosomal RNA large subunit methyltransferase E (216 aa).

Residues Gly-60, Trp-62, Asp-80, Asp-96, and Asp-121 each contribute to the S-adenosyl-L-methionine site. Catalysis depends on Lys-161, which acts as the Proton acceptor.

Belongs to the class I-like SAM-binding methyltransferase superfamily. RNA methyltransferase RlmE family.

It localises to the cytoplasm. It carries out the reaction uridine(2552) in 23S rRNA + S-adenosyl-L-methionine = 2'-O-methyluridine(2552) in 23S rRNA + S-adenosyl-L-homocysteine + H(+). In terms of biological role, specifically methylates the uridine in position 2552 of 23S rRNA at the 2'-O position of the ribose in the fully assembled 50S ribosomal subunit. The chain is Ribosomal RNA large subunit methyltransferase E from Pseudomonas fluorescens (strain SBW25).